Here is a 344-residue protein sequence, read N- to C-terminus: Phenylalanine--tRNA ligase alpha subunit (344 aa).

Glu-256 provides a ligand contact to Mg(2+).

The protein belongs to the class-II aminoacyl-tRNA synthetase family. Phe-tRNA synthetase alpha subunit type 1 subfamily. Tetramer of two alpha and two beta subunits. Mg(2+) is required as a cofactor.

It is found in the cytoplasm. It carries out the reaction tRNA(Phe) + L-phenylalanine + ATP = L-phenylalanyl-tRNA(Phe) + AMP + diphosphate + H(+). The polypeptide is Phenylalanine--tRNA ligase alpha subunit (Bacillus cytotoxicus (strain DSM 22905 / CIP 110041 / 391-98 / NVH 391-98)).